The following is a 132-amino-acid chain: Small ribosomal subunit protein uS11 (132 aa).

Belongs to the universal ribosomal protein uS11 family. Part of the 30S ribosomal subunit. Interacts with proteins S7 and S18. Binds to IF-3.

Functionally, located on the platform of the 30S subunit, it bridges several disparate RNA helices of the 16S rRNA. Forms part of the Shine-Dalgarno cleft in the 70S ribosome. In Alcanivorax borkumensis (strain ATCC 700651 / DSM 11573 / NCIMB 13689 / SK2), this protein is Small ribosomal subunit protein uS11.